The sequence spans 443 residues: MTSQFASLWQQSLEILKQELKPASFDTWLKNTQLVTIQNGEAHIGVPNDLARDWLENRYATLVKNALSVVLGESVEVRFFTPSADSRRSEPSRRPVATEESSPPLLNPKYTFDTFVVGNSNRFAHAAALAVAEAPAKAYNPLFVYGGVGLGKTHLMQAIGHFVIEQHPQSRVVYVSSEKFTNELINAIRDDKTVEFRNRYRNIDVLLIDDIQFLAGKERTQEEFFHTFNALHESSKQIIISSDRPPKEIPTLEDRLRSRFEWGLITDINPPDLETRIAILRKKAILENLDVPNEVMVFIANIIQSNIRELEGALNRVIAYANLSGKSLTSEVAEEALKNIIPSHRAKVITIALIQEIVAEHYNMRVEDFKAKKRTRDVAFPRQIAMYLSREMLDVSLPKIGEEFGGRDHTTVIHAHEKITKDIEKDPQLEMTIQVLKEKIQRA.

The domain I, interacts with DnaA modulators stretch occupies residues 1–80; that stretch reads MTSQFASLWQ…LGESVEVRFF (80 aa). The tract at residues 80-104 is domain II; it reads FTPSADSRRSEPSRRPVATEESSPP. The segment at 83–105 is disordered; that stretch reads SADSRRSEPSRRPVATEESSPPL. A compositionally biased stretch (basic and acidic residues) spans 85–97; it reads DSRRSEPSRRPVA. Positions 105 to 321 are domain III, AAA+ region; sequence LLNPKYTFDT…GALNRVIAYA (217 aa). G149, G151, K152, and T153 together coordinate ATP. Residues 322-443 form a domain IV, binds dsDNA region; it reads NLSGKSLTSE…QVLKEKIQRA (122 aa).

Belongs to the DnaA family. As to quaternary structure, oligomerizes as a right-handed, spiral filament on DNA at oriC.

It localises to the cytoplasm. Functionally, plays an essential role in the initiation and regulation of chromosomal replication. ATP-DnaA binds to the origin of replication (oriC) to initiate formation of the DNA replication initiation complex once per cell cycle. Binds the DnaA box (a 9 base pair repeat at the origin) and separates the double-stranded (ds)DNA. Forms a right-handed helical filament on oriC DNA; dsDNA binds to the exterior of the filament while single-stranded (ss)DNA is stabiized in the filament's interior. The ATP-DnaA-oriC complex binds and stabilizes one strand of the AT-rich DNA unwinding element (DUE), permitting loading of DNA polymerase. After initiation quickly degrades to an ADP-DnaA complex that is not apt for DNA replication. Binds acidic phospholipids. The polypeptide is Chromosomal replication initiator protein DnaA (Heliobacterium modesticaldum (strain ATCC 51547 / Ice1)).